The primary structure comprises 533 residues: MEVLGLLKFEVSGTIVTVTLLVALLALLKWYSMSAFSRLEKLGIRHPKPSPFVGNLMFFRQGFWESQLELRERYGPLCGYYLGRRMHVVISEPDMIKQVLVENFSNFSNRMASGLEPKMVADSVLLLRDRRWEEVRGALMSSFSPEKLDEMTPLISQACELLVAHLKRYAASRDAFNIQRCYCCYTIDVVASVAFGTQVDSQNSPEDPFVQHCRRASTFCIPRPLLVLILSFPSIMVPLARILPNKNRDELNGFFNTLIRNVIALRDQQAAEERRRDFLQMVLDAQHSMNSVGVEGFDMVPESLSSSECTKEPPQRCHPTSTSKPFTVDEIVGQAFLFLIAGHEVITNTLSFITYLLATHPDCQERLLKEVDLFMGKHPAPEYHSLQEGLPYLDMVISETLRMYPPAFRFTREAAQDCEVLGQRIPAGTVLEIAVGALHHDPEHWPNPETFDPERFTAEARLQRRPFTYLPFGAGPRSCLGVRLGLLVVKLTILQVLHKFRFEASPETQVPLQLESKSALGPKNGVYIKIVSR.

Over 1-10 (MEVLGLLKFE) the chain is Cytoplasmic. Residues 11–31 (VSGTIVTVTLLVALLALLKWY) form a helical membrane-spanning segment. At 32–75 (SMSAFSRLEKLGIRHPKPSPFVGNLMFFRQGFWESQLELRERYG) the chain is on the lumenal side. Residues 76–96 (PLCGYYLGRRMHVVISEPDMI) form a helical membrane-spanning segment. Residues 97 to 223 (KQVLVENFSN…RRASTFCIPR (127 aa)) are Cytoplasmic-facing. A helical membrane pass occupies residues 224 to 244 (PLLVLILSFPSIMVPLARILP). Over 245 to 335 (NKNRDELNGF…FTVDEIVGQA (91 aa)) the chain is Lumenal. The helical transmembrane segment at 336–356 (FLFLIAGHEVITNTLSFITYL) threads the bilayer. Residues 357 to 533 (LATHPDCQER…NGVYIKIVSR (177 aa)) are Cytoplasmic-facing. C479 provides a ligand contact to heme.

It belongs to the cytochrome P450 family. In terms of assembly, monomer. The cofactor is heme. Expressed primarily in lung, kidney, and spleen.

The protein localises to the endoplasmic reticulum membrane. The enzyme catalyses prostaglandin H2 = thromboxane A2. It carries out the reaction prostaglandin H2 = (12S)-hydroxy-(5Z,8E,10E)-heptadecatrienoate + malonaldehyde. It catalyses the reaction a hydroperoxyeicosatetraenoate = an oxoeicosatetraenoate + H2O. The catalysed reaction is (15S)-hydroperoxy-(5Z,8Z,11Z,13E)-eicosatetraenoate = 15-oxo-(5Z,8Z,11Z,13E)-eicosatetraenoate + H2O. The enzyme catalyses (15S)-hydroperoxy-(5Z,8Z,11Z,13E)-eicosatetraenoate + AH2 = (15S)-hydroxy-(5Z,8Z,11Z,13E)-eicosatetraenoate + A + H2O. Functionally, catalyzes the conversion of prostaglandin H2 (PGH2) to thromboxane A2 (TXA2), a potent inducer of blood vessel constriction and platelet aggregation. Also cleaves PGH2 to 12-hydroxy-heptadecatrienoicacid (12-HHT) and malondialdehyde, which is known to act as a mediator of DNA damage. 12-HHT and malondialdehyde are formed stoichiometrically in the same amounts as TXA2. Additionally, displays dehydratase activity, toward (15S)-hydroperoxy-(5Z,8Z,11Z,13E)-eicosatetraenoate (15(S)-HPETE) producing 15-KETE and 15-HETE. The protein is Thromboxane-A synthase (Tbxas1) of Mus musculus (Mouse).